The following is a 145-amino-acid chain: MVKVMVVAEVRPSEDVNKVLSAISNFFDFEKTNTRKEGIIDILVLEARTLKSLLKFHRVLRNERILDSARKYLMKGIEGNTIAFMIHKQAAAVGVLSFVDSDKESPLGAIKFYIEYQNPKEVVDWLAPRTAHGVPLWDNPIPPDV.

Belongs to the UPF0201 family.

The polypeptide is UPF0201 protein LS215_1276 (Saccharolobus islandicus (strain L.S.2.15 / Lassen #1) (Sulfolobus islandicus)).